The primary structure comprises 562 residues: Arginine--tRNA ligase (562 aa).

A 'HIGH' region motif is present at residues 129-139 (ANPTGPLHVGH).

This sequence belongs to the class-I aminoacyl-tRNA synthetase family. As to quaternary structure, monomer.

It localises to the cytoplasm. The catalysed reaction is tRNA(Arg) + L-arginine + ATP = L-arginyl-tRNA(Arg) + AMP + diphosphate. The chain is Arginine--tRNA ligase from Xanthomonas oryzae pv. oryzae (strain KACC10331 / KXO85).